The sequence spans 1454 residues: Alpha-2-macroglobulin-like protein 1 (1454 aa).

Residues 1-17 (MWAQLLLGMLALSPAIA) form the signal peptide. A disulfide bond links cysteine 40 and cysteine 78. Residue asparagine 120 is glycosylated (N-linked (GlcNAc...) asparagine). Intrachain disulfides connect cysteine 241/cysteine 291 and cysteine 259/cysteine 279. Asparagine 281 and asparagine 409 each carry an N-linked (GlcNAc...) asparagine glycan. 7 disulfides stabilise this stretch: cysteine 464–cysteine 557, cysteine 589–cysteine 769, cysteine 819–cysteine 847, cysteine 845–cysteine 881, cysteine 919–cysteine 1307, cysteine 1075–cysteine 1123, and cysteine 1338–cysteine 1453. The interval 695–726 (SHRSPEYSTAMGAGGGHPEAFESSTPLHQAED) is bait region. Asparagine 857 carries N-linked (GlcNAc...) asparagine glycosylation. The segment at residues 970–973 (CGEQ) is a cross-link (isoglutamyl cysteine thioester (Cys-Gln)). N-linked (GlcNAc...) asparagine glycosylation occurs at asparagine 1020.

It belongs to the protease inhibitor I39 (alpha-2-macroglobulin) family. As to quaternary structure, monomer. In terms of tissue distribution, in the epidermis, expressed predominantly in the granular layer at the apical edge of keratinocytes (at protein level). Also detected in placenta, testis and thymus but not in epithelia of kidney, lung, small intestine or colon.

The protein resides in the secreted. Its function is as follows. Is able to inhibit all four classes of proteinases by a unique 'trapping' mechanism. This protein has a peptide stretch, called the 'bait region' which contains specific cleavage sites for different proteinases. When a proteinase cleaves the bait region, a conformational change is induced in the protein which traps the proteinase. The entrapped enzyme remains active against low molecular weight substrates (activity against high molecular weight substrates is greatly reduced). Following cleavage in the bait region a thioester bond is hydrolyzed and mediates the covalent binding of the protein to the proteinase. Displays inhibitory activity against chymotrypsin, papain, thermolysin, subtilisin A and, to a lesser extent, elastase but not trypsin. May play an important role during desquamation by inhibiting extracellular proteases. The sequence is that of Alpha-2-macroglobulin-like protein 1 from Homo sapiens (Human).